The primary structure comprises 159 residues: Ribonuclease H (159 aa).

Residues 8 to 150 enclose the RNase H type-1 domain; it reads NLKEITMYTD…CDQLAVAAAK (143 aa). 4 residues coordinate Mg(2+): Asp-17, Glu-55, Asp-77, and Asp-142.

Belongs to the RNase H family. In terms of assembly, monomer. Mg(2+) serves as cofactor.

The protein resides in the cytoplasm. It carries out the reaction Endonucleolytic cleavage to 5'-phosphomonoester.. Functionally, endonuclease that specifically degrades the RNA of RNA-DNA hybrids. The chain is Ribonuclease H from Desulforamulus reducens (strain ATCC BAA-1160 / DSM 100696 / MI-1) (Desulfotomaculum reducens).